The primary structure comprises 143 residues: Histone H2AX (143 aa).

Residues 1-22 (MSGRGKTGGKARAKAKSRSSRA) are disordered. Ser-2 carries the N-acetylserine modification. At Ser-2 the chain carries Phosphoserine. 2 positions are modified to N6-acetyllysine: Lys-6 and Lys-10. Over residues 7-19 (TGGKARAKAKSRS) the composition is skewed to basic residues. Lys-10 carries the N6-lactoyllysine; alternate modification. Glycyl lysine isopeptide (Lys-Gly) (interchain with G-Cter in ubiquitin) cross-links involve residues Lys-14 and Lys-16. Lys-37 carries the N6-acetyllysine modification. Lys-120 is covalently cross-linked (Glycyl lysine isopeptide (Lys-Gly) (interchain with G-Cter in ubiquitin)). The tract at residues 121 to 143 (TSATVGPKAPSGGKKATQASQEY) is disordered. Ser-122 is modified (phosphoserine). Residues Lys-128 and Lys-135 each participate in a glycyl lysine isopeptide (Lys-Gly) (interchain with G-Cter in SUMO2) cross-link. Phosphoserine; by ATM, ATR and PRKDC is present on Ser-140. Positions 140–141 (SQ) match the [ST]-Q motif motif. Tyr-143 is modified (phosphotyrosine; by WSTF).

It belongs to the histone H2A family. In terms of assembly, the nucleosome is a histone octamer containing two molecules each of H2A, H2B, H3 and H4 assembled in one H3-H4 heterotetramer and two H2A-H2B heterodimers. The octamer wraps approximately 147 bp of DNA. Interacts with numerous proteins required for DNA damage signaling and repair when phosphorylated on Ser-140. These include MDC1, TP53BP1, BRCA1 and the MRN complex, composed of MRE11, RAD50, and NBN. Interaction with the MRN complex is mediated at least in part by NBN. Also interacts with DHX9/NDHII when phosphorylated on Ser-140 and MCPH1 when phosphorylated at Ser-140 or Tyr-143. Interacts with ARRB2; the interaction is detected in the nucleus upon OR1D2 stimulation. Interacts with WRAP53/TCAB1. Interacts with HDGFL2. Interacts with DNA damage up-regulated protein DDUP. Forms a complex with DDUP and RAD18 following DDUP phosphorylation. (Microbial infection) Interacts with Epstein-Barr virus protein EBNA6. Phosphorylated by VRK1. Phosphorylated on Ser-140 (to form gamma-H2AX or H2AX139ph) in response to DNA double strand breaks (DSBs) generated by exogenous genotoxic agents and by stalled replication forks, and may also occur during meiotic recombination events and immunoglobulin class switching in lymphocytes. Phosphorylation can extend up to several thousand nucleosomes from the actual site of the DSB and may mark the surrounding chromatin for recruitment of proteins required for DNA damage signaling and repair. Widespread phosphorylation may also serve to amplify the damage signal or aid repair of persistent lesions. Phosphorylation of Ser-140 (H2AX139ph) in response to ionizing radiation is mediated by both ATM and PRKDC while defects in DNA replication induce Ser-140 phosphorylation (H2AX139ph) subsequent to activation of ATR and PRKDC. Dephosphorylation of Ser-140 by PP2A is required for DNA DSB repair. In meiosis, Ser-140 phosphorylation (H2AX139ph) may occur at synaptonemal complexes during leptotene as an ATM-dependent response to the formation of programmed DSBs by SPO11. Ser-140 phosphorylation (H2AX139ph) may subsequently occurs at unsynapsed regions of both autosomes and the XY bivalent during zygotene, downstream of ATR and BRCA1 activation. Ser-140 phosphorylation (H2AX139ph) may also be required for transcriptional repression of unsynapsed chromatin and meiotic sex chromosome inactivation (MSCI), whereby the X and Y chromosomes condense in pachytene to form the heterochromatic XY-body. During immunoglobulin class switch recombination in lymphocytes, Ser-140 phosphorylation (H2AX139ph) may occur at sites of DNA-recombination subsequent to activation of the activation-induced cytidine deaminase AICDA. Phosphorylation at Tyr-143 (H2AXY142ph) by BAZ1B/WSTF determines the relative recruitment of either DNA repair or pro-apoptotic factors. Phosphorylation at Tyr-143 (H2AXY142ph) favors the recruitment of APBB1/FE65 and pro-apoptosis factors such as MAPK8/JNK1, triggering apoptosis. In contrast, dephosphorylation of Tyr-143 by EYA proteins (EYA1, EYA2, EYA3 or EYA4) favors the recruitment of MDC1-containing DNA repair complexes to the tail of phosphorylated Ser-140 (H2AX139ph). Post-translationally, monoubiquitination of Lys-120 (H2AXK119ub) by RING1 and RNF2/RING2 complex gives a specific tag for epigenetic transcriptional repression. Following DNA double-strand breaks (DSBs), it is ubiquitinated through 'Lys-63' linkage of ubiquitin moieties by the E2 ligase UBE2N and the E3 ligases RNF8 and RNF168, leading to the recruitment of repair proteins to sites of DNA damage. Ubiquitination at Lys-14 and Lys-16 (H2AK13Ub and H2AK15Ub, respectively) in response to DNA damage is initiated by RNF168 that mediates monoubiquitination at these 2 sites, and 'Lys-63'-linked ubiquitin are then conjugated to monoubiquitin; RNF8 is able to extend 'Lys-63'-linked ubiquitin chains in vitro. H2AK119Ub and ionizing radiation-induced 'Lys-63'-linked ubiquitination (H2AK13Ub and H2AK15Ub) are distinct events. In terms of processing, acetylation at Lys-6 (H2AXK5ac) by KAT5 component of the NuA4 histone acetyltransferase complex promotes NBN/NBS1 assembly at the sites of DNA damage. Acetylation at Lys-37 increases in S and G2 phases. This modification has been proposed to play a role in DNA double-strand break repair.

Its subcellular location is the nucleus. It localises to the chromosome. Its function is as follows. Variant histone H2A which replaces conventional H2A in a subset of nucleosomes. Nucleosomes wrap and compact DNA into chromatin, limiting DNA accessibility to the cellular machineries which require DNA as a template. Histones thereby play a central role in transcription regulation, DNA repair, DNA replication and chromosomal stability. DNA accessibility is regulated via a complex set of post-translational modifications of histones, also called histone code, and nucleosome remodeling. Required for checkpoint-mediated arrest of cell cycle progression in response to low doses of ionizing radiation and for efficient repair of DNA double strand breaks (DSBs) specifically when modified by C-terminal phosphorylation. This Homo sapiens (Human) protein is Histone H2AX.